Here is a 959-residue protein sequence, read N- to C-terminus: MGLSEDLHARARTLMQTLESALNTPGSRGIGTANPTIYDTAWVAMVSREIDGKQVFVFPETFTYIYEHQEADGSWSGDGSLIDSIVNTLACLVALKMHESNASKPDIPARARAAQNYLDDALKRWDIMETERVAYEMIVPCLLKQLDAFGVSFTFPHHDLLYNMYAGKLAKLNWEAIYAKNSSLLHCMEAFVGVCDFDRMPHLLRDGNFMATPSTTAAYLMKATKWDDRAEDYLRHVIEVYAPHGRDVVPNLWPMTFFEIVWSLSSLYDNNLEFAQMDPECLDRIALKLREFLVAGKGVLGFVPGTTHDADMSSKTLMLLQVLNHPYSHDEFVTEFEAPTYFRCYSFERNASVTVNSNCLMSLLHAPDVNKYESQIVKIATYVADVWWTSAGVVKDKWNVSEWYSSMLSSQALVRLLFEHGKGNLKSISEELLSRVSIACFTMISRILQSQKPDGSWGCAEETSYALITLANVASLPTCDLIRDHLYKVIESAKAYLTPIFYARPAAKPEDRVWIDKVTYSVESFRDAYLVSALNVPIPRFDPSSISTLPAISQTLPKELSKFFGRLDMFKPAPEWRKLTWGIEATLMGPELNRVPSSTFAKVEKGAAGKWFEFLPYMTIAPSSLEGTPISSQGMLDVLVLIRGLYNTDDYLDMTLIKATNEDLDDLKKKIRDLFADPKSFSTLSEVPDDRMPTHIEVIERFAYSLLNHPRAQLASDNDKGLLRSEIEHYFLAGIAQCEENILLRERGLDKERIGTSHYRWTHVVGADNVAGTIALVFALCLLGHQINEERGSRDLVDVFPSPVLKYLFNDCVMHFGTFSRLANDLHSISRDFNEVNLNSIMFSEFTGPKSGTDTEKAREAALLELTKFERKATDDGFEYLVQQLTPHVGAKRARDYINIIRVTYLHTALYDDLGRLTRADISNANQEVSKGTNGVKKINGSSTNGTKVTANGSNGIHH.

The interval 1-542 is class II diterpene cyclase; sequence MGLSEDLHAR…ALNVPIPRFD (542 aa). Residues 309-312 carry the DXDD motif motif; sequence DADM. Aspartate 311 (for class II diterpene cyclase activity) is an active-site residue. Residues 543–959 form a class I diterpene synthase region; that stretch reads PSSISTLPAI…TANGSNGIHH (417 aa). Aspartate 649 (for class I diterpene synthase activity) is an active-site residue. Mg(2+)-binding residues include aspartate 649, aspartate 653, and asparagine 824. A DDXXD motif motif is present at residues 649-653; sequence DDYLD. The tract at residues 931 to 959 is disordered; it reads KGTNGVKKINGSSTNGTKVTANGSNGIHH. Positions 940–959 are enriched in polar residues; it reads NGSSTNGTKVTANGSNGIHH.

The protein belongs to the terpene synthase family. The cofactor is Mg(2+).

Its pathway is secondary metabolite biosynthesis; terpenoid biosynthesis. Its function is as follows. Bifunctional premutilin synthase; part of the gene cluster that mediates the biosynthesis of pleuromutilin, a tricyclic diterpene showing antibacterial properties. The geranylgeranyl diphosphate (GGPP) synthase catalyzes the first step in pleuromutilin biosynthesis. GGPP is then substrate of the premutilin synthase (PS) to yield premutilin. Premutilin synthase is a bifunctional enzyme composed of the fusion of a class II diterpene cyclase (DTC) and a class I diterpene synthase (DTS), with the corresponding domains and active sites containing characteristic aspartate-rich motifs. GGPP is first converted to mutildienyl-diphosphate (MPP) at the class II DTC site. MPP is subsequently further cyclized at the class I DTS site, followed by a 1,5-hydride shift and addition of water prior to terminating deprotonation, to yield premutilin. In addition to the aforementioned GGPP synthase and bifunctional diterpene synthase, the cluster also contains three cytochrome P450 monooxygenases, a short-chain alcohol dehydrogenase, and an acyltransferase, involved in the conversion of premutilin to pleuromutilin. The cytochrome P450 monooxygenases P450-1 and P450-2 hydroxylate premutilin at C-11 and C-3, respectively, producing 11-hydroxypremutilin and 3-hydroxypremutilin. The combination of the actions of both ple5 and ple6 leads to the production of 3,11-dihydroxypremutilin. The short chain dehydrogenase SDR further converts 3,11-dihydroxypremutilin into mutilin. The acetyltransferase ATF then acetylates mutilin to produce 14-O-acetylmutilin. Finally, the cytochrome P450 monooxygenase P450-3 catalyzes hydroxylation on the alpha position of the acetyl side chain of 14-O-acetylmutilin to yield pleuromutilin. The sequence is that of Bifunctional premutilin synthase from Clitopilus passeckerianus (Pleurotus passeckerianus).